Here is a 254-residue protein sequence, read N- to C-terminus: MSGSYPSPKGIHPFLLLALVVGGAVQASKIVGGHEARPHSRPYVASLQLSRFPGSHFCGGTLIHPRFVLTAAHCLQDISWQLVTVVLGAHDLLSSEPEQQKFTISQVFQNNYNPEENLNDVLLLQLNRTASLGKEVAVASLPQQDQTLSQGTQCLAMGWGRLGTQAPTPRVLQELNVTVVTFLCREHNVCTLVPRRAAGICFGDSGGPLICNGILHGVDSFVIRECASLQFPDFFARVSMYVDWIQNVLRGAEP.

The first 27 residues, 1-27 (MSGSYPSPKGIHPFLLLALVVGGAVQA), serve as a signal peptide directing secretion. A propeptide spanning residues 28–29 (SK) is cleaved from the precursor. Positions 30 to 250 (IVGGHEARPH…YVDWIQNVLR (221 aa)) constitute a Peptidase S1 domain. A disulfide bridge connects residues cysteine 58 and cysteine 74. Catalysis depends on charge relay system residues histidine 73 and aspartate 120. 2 N-linked (GlcNAc...) asparagine glycosylation sites follow: asparagine 127 and asparagine 176. 3 disulfide bridges follow: cysteine 154/cysteine 211, cysteine 184/cysteine 190, and cysteine 201/cysteine 226. Serine 205 (charge relay system) is an active-site residue. Positions 251–254 (GAEP) are excised as a propeptide.

Belongs to the peptidase S1 family. Elastase subfamily. As to quaternary structure, may form dimers. Interacts with CD177; the interaction tethers PRTN3 to the cell surface; the interaction is direct. Interacts with SERPINB1. Interacts with ADGRG3.

The protein localises to the lysosome. Its subcellular location is the secreted. It is found in the cell membrane. The protein resides in the membrane raft. It catalyses the reaction Hydrolysis of proteins, including elastin, by preferential cleavage: -Ala-|-Xaa- &gt; -Val-|-Xaa-.. Serine protease that degrades elastin, fibronectin, laminin, vitronectin, and collagen types I, III, and IV (in vitro). By cleaving and activating receptor F2RL1/PAR-2, enhances endothelial cell barrier function and thus vascular integrity during neutrophil transendothelial migration. May play a role in neutrophil transendothelial migration, probably when associated with CD177. Triggers inflammatory processes in neutrophils by interacting with ADGRG3 upstream of F2RL1/PAR2 activation. This is Myeloblastin (Prtn3) from Mus musculus (Mouse).